A 282-amino-acid chain; its full sequence is Pantothenate synthetase (282 aa).

ATP is bound at residue 30 to 37 (MGYLHEGH). Residue His-37 is the Proton donor of the active site. Residue Gln-61 coordinates (R)-pantoate. A beta-alanine-binding site is contributed by Gln-61. Residue 147–150 (GEKD) coordinates ATP. Position 153 (Gln-153) interacts with (R)-pantoate. ATP contacts are provided by residues Ile-176 and 184–187 (KSSR).

The protein belongs to the pantothenate synthetase family. As to quaternary structure, homodimer.

The protein localises to the cytoplasm. It catalyses the reaction (R)-pantoate + beta-alanine + ATP = (R)-pantothenate + AMP + diphosphate + H(+). Its pathway is cofactor biosynthesis; (R)-pantothenate biosynthesis; (R)-pantothenate from (R)-pantoate and beta-alanine: step 1/1. Its function is as follows. Catalyzes the condensation of pantoate with beta-alanine in an ATP-dependent reaction via a pantoyl-adenylate intermediate. This Enterococcus faecalis (strain ATCC 700802 / V583) protein is Pantothenate synthetase.